Consider the following 241-residue polypeptide: 1-(5-phosphoribosyl)-5-[(5-phosphoribosylamino)methylideneamino] imidazole-4-carboxamide isomerase (241 aa).

Asp-10 functions as the Proton acceptor in the catalytic mechanism. Asp-129 functions as the Proton donor in the catalytic mechanism.

The protein belongs to the HisA/HisF family.

The protein resides in the cytoplasm. It carries out the reaction 1-(5-phospho-beta-D-ribosyl)-5-[(5-phospho-beta-D-ribosylamino)methylideneamino]imidazole-4-carboxamide = 5-[(5-phospho-1-deoxy-D-ribulos-1-ylimino)methylamino]-1-(5-phospho-beta-D-ribosyl)imidazole-4-carboxamide. Its pathway is amino-acid biosynthesis; L-histidine biosynthesis; L-histidine from 5-phospho-alpha-D-ribose 1-diphosphate: step 4/9. The protein is 1-(5-phosphoribosyl)-5-[(5-phosphoribosylamino)methylideneamino] imidazole-4-carboxamide isomerase of Salinispora tropica (strain ATCC BAA-916 / DSM 44818 / JCM 13857 / NBRC 105044 / CNB-440).